A 124-amino-acid polypeptide reads, in one-letter code: Fluoride-specific ion channel FluC (124 aa).

4 helical membrane passes run 1-21 (MFNL…RHLT), 35-55 (WGTM…IAIL), 66-86 (LFVA…SLDF), and 99-119 (FGYA…GLWL). Na(+) contacts are provided by glycine 74 and threonine 77.

The protein belongs to the fluoride channel Fluc/FEX (TC 1.A.43) family.

The protein resides in the cell inner membrane. The catalysed reaction is fluoride(in) = fluoride(out). Its activity is regulated as follows. Na(+) is not transported, but it plays an essential structural role and its presence is essential for fluoride channel function. In terms of biological role, fluoride-specific ion channel. Important for reducing fluoride concentration in the cell, thus reducing its toxicity. The chain is Fluoride-specific ion channel FluC from Mesorhizobium japonicum (strain LMG 29417 / CECT 9101 / MAFF 303099) (Mesorhizobium loti (strain MAFF 303099)).